The primary structure comprises 595 residues: Aspartate--tRNA(Asp/Asn) ligase (595 aa).

Residue Glu175 participates in L-aspartate binding. The tract at residues 199-202 (QQYK) is aspartate. The L-aspartate site is built by Arg221 and His454. 221–223 (RDE) lines the ATP pocket. ATP is bound at residue Glu488. Arg495 is a binding site for L-aspartate. Position 540–543 (540–543 (GIDR)) interacts with ATP.

Belongs to the class-II aminoacyl-tRNA synthetase family. Type 1 subfamily. As to quaternary structure, homodimer.

It localises to the cytoplasm. It catalyses the reaction tRNA(Asx) + L-aspartate + ATP = L-aspartyl-tRNA(Asx) + AMP + diphosphate. Functionally, aspartyl-tRNA synthetase with relaxed tRNA specificity since it is able to aspartylate not only its cognate tRNA(Asp) but also tRNA(Asn). Reaction proceeds in two steps: L-aspartate is first activated by ATP to form Asp-AMP and then transferred to the acceptor end of tRNA(Asp/Asn). This chain is Aspartate--tRNA(Asp/Asn) ligase, found in Brucella anthropi (strain ATCC 49188 / DSM 6882 / CCUG 24695 / JCM 21032 / LMG 3331 / NBRC 15819 / NCTC 12168 / Alc 37) (Ochrobactrum anthropi).